The following is a 245-amino-acid chain: LOB domain-containing protein 16 (245 aa).

The region spanning 14 to 116 (SPCGACKFLR…SQVMQMKAQI (103 aa)) is the LOB domain. The tract at residues 162 to 183 (YYGHVNPNNPVSPQSSLEESFS) is disordered.

This sequence belongs to the LOB domain-containing protein family. In terms of assembly, homodimer and heterodimer with LBD18. As to expression, expressed in roots and faintly in shoots.

It localises to the nucleus. In terms of biological role, transcriptional activator. Involved in lateral root formation. Regulated by the transcriptional activators ARF7 and ARF19. Functions in the initiation and emergence of lateral roots, in conjunction with LBD18, downstream of ARF7 and ARF19. Acts downstream of the auxin influx carriers AUX1 and LAX1 in the regulation of lateral root initiation and development. The protein is LOB domain-containing protein 16 (LBD16) of Arabidopsis thaliana (Mouse-ear cress).